The primary structure comprises 261 residues: Tryptophan synthase alpha chain (261 aa).

Catalysis depends on proton acceptor residues Glu-49 and Asp-60.

It belongs to the TrpA family. Tetramer of two alpha and two beta chains.

The catalysed reaction is (1S,2R)-1-C-(indol-3-yl)glycerol 3-phosphate + L-serine = D-glyceraldehyde 3-phosphate + L-tryptophan + H2O. It participates in amino-acid biosynthesis; L-tryptophan biosynthesis; L-tryptophan from chorismate: step 5/5. Its function is as follows. The alpha subunit is responsible for the aldol cleavage of indoleglycerol phosphate to indole and glyceraldehyde 3-phosphate. This chain is Tryptophan synthase alpha chain, found in Roseiflexus sp. (strain RS-1).